Here is a 91-residue protein sequence, read N- to C-terminus: Small ribosomal subunit protein uS15 (91 aa).

This sequence belongs to the universal ribosomal protein uS15 family. In terms of assembly, part of the 30S ribosomal subunit. Forms a bridge to the 50S subunit in the 70S ribosome, contacting the 23S rRNA.

Functionally, one of the primary rRNA binding proteins, it binds directly to 16S rRNA where it helps nucleate assembly of the platform of the 30S subunit by binding and bridging several RNA helices of the 16S rRNA. Its function is as follows. Forms an intersubunit bridge (bridge B4) with the 23S rRNA of the 50S subunit in the ribosome. This is Small ribosomal subunit protein uS15 from Rickettsia prowazekii (strain Madrid E).